A 174-amino-acid polypeptide reads, in one-letter code: Protein GrpE (174 aa).

Belongs to the GrpE family. Homodimer.

The protein resides in the cytoplasm. Participates actively in the response to hyperosmotic and heat shock by preventing the aggregation of stress-denatured proteins, in association with DnaK and GrpE. It is the nucleotide exchange factor for DnaK and may function as a thermosensor. Unfolded proteins bind initially to DnaJ; upon interaction with the DnaJ-bound protein, DnaK hydrolyzes its bound ATP, resulting in the formation of a stable complex. GrpE releases ADP from DnaK; ATP binding to DnaK triggers the release of the substrate protein, thus completing the reaction cycle. Several rounds of ATP-dependent interactions between DnaJ, DnaK and GrpE are required for fully efficient folding. This chain is Protein GrpE, found in Methanothermobacter thermautotrophicus (strain ATCC 29096 / DSM 1053 / JCM 10044 / NBRC 100330 / Delta H) (Methanobacterium thermoautotrophicum).